Consider the following 525-residue polypeptide: Mitochondrial-processing peptidase subunit alpha (525 aa).

The N-terminal 33 residues, 1–33 (MAAVVLAATRLLRGSGSWGCSRLRFGPPAYRRF), are a transit peptide targeting the mitochondrion. Lysine 64 carries the N6-succinyllysine modification. Lysine 299 bears the N6-acetyllysine mark.

Belongs to the peptidase M16 family. Heterodimer of PMPCA (alpha) and PMPCB (beta) subunits, forming the mitochondrial processing protease (MPP) in which PMPCA is involved in substrate recognition and binding and PMPCB is the catalytic subunit.

The protein resides in the mitochondrion matrix. It localises to the mitochondrion inner membrane. Substrate recognition and binding subunit of the essential mitochondrial processing protease (MPP), which cleaves the mitochondrial sequence off newly imported precursors proteins. The polypeptide is Mitochondrial-processing peptidase subunit alpha (PMPCA) (Pongo abelii (Sumatran orangutan)).